The chain runs to 149 residues: Large ribosomal subunit protein bL9 (149 aa).

It belongs to the bacterial ribosomal protein bL9 family.

In terms of biological role, binds to the 23S rRNA. The chain is Large ribosomal subunit protein bL9 from Salmonella agona (strain SL483).